Consider the following 764-residue polypeptide: Thyrotropin receptor (764 aa).

The signal sequence occupies residues 1–21; that stretch reads MSLTPLLQLALLLALPRSLRG. The Extracellular segment spans residues 22–413; that stretch reads KGCPSPPCEC…EFNPCEDIMG (392 aa). A disulfide bridge connects residues C31 and C41. N-linked (GlcNAc...) asparagine glycans are attached at residues N77 and N99. LRR repeat units lie at residues 125–150, 151–174, 176–199, 201–223, 225–248, and 250–271; these read LPLL…VYST, DVFF…AFQG, CNET…AFNG, KLDA…AFGG, FSGP…GLEH, and KELI…SFLH. N-linked (GlcNAc...) asparagine glycosylation is found at N177 and N198. A glycan (N-linked (GlcNAc...) asparagine) is linked at N302. Y385 is modified (sulfotyrosine). Residues 414–441 traverse the membrane as a helical segment; that stretch reads YRFLRIVVWFVSLLALLGNVFVLVILLT. Topologically, residues 442–450 are cytoplasmic; sequence SHYKLTVPR. The helical transmembrane segment at 451 to 473 threads the bilayer; that stretch reads FLMCNLAFADFCMGMYLLLIASV. The Extracellular segment spans residues 474–494; that stretch reads DLYTQSEYYNHAIDWQTGPGC. C494 and C569 are disulfide-bonded. A helical transmembrane segment spans residues 495–517; it reads NTAGFFTVFASELSVYTLTVITL. The Cytoplasmic segment spans residues 518 to 537; sequence ERWYAITFAMRLDRKIRLRH. A helical transmembrane segment spans residues 538–560; it reads AYAIMAGGWVCCFLLALLPLVGI. The Extracellular portion of the chain corresponds to 561–580; sequence SSYAKVSICLPMDTETPLAL. A helical transmembrane segment spans residues 581–602; sequence AYIILVLLLNIVAFTIVCSCYV. Over 603 to 625 the chain is Cytoplasmic; it reads KIYITVRNPQYNPGDKDTKIAKR. The helical transmembrane segment at 626–649 threads the bilayer; that stretch reads MAVLIFTDFMCMAPISFYALSALM. Topologically, residues 650 to 660 are extracellular; that stretch reads NKPLITVTNSK. Residues 661–682 form a helical membrane-spanning segment; it reads ILLVLFYPLNSCANPFLYAIFT. Over 683–764 the chain is Cytoplasmic; it reads KAFQRDVFIL…ISKEYKQPVL (82 aa). A PDZ-binding motif is present at residues 762–764; the sequence is PVL.

This sequence belongs to the G-protein coupled receptor 1 family. FSH/LSH/TSH subfamily. Interacts with heterodimer GPHA2:GPHB5; this interaction stimulates cAMP production. Interacts (via the PDZ-binding motif) with SCRIB; regulates TSHR trafficking and function. Post-translationally, glycosylated. Sulfated. Sulfation on Tyr-385 plays a role in thyrotropin receptor binding and activation. As to expression, expressed in thyroide cells (at protein level).

The protein resides in the cell membrane. It localises to the basolateral cell membrane. Receptor for the thyroid-stimulating hormone (TSH) or thyrotropin. Also acts as a receptor for the heterodimeric glycoprotein hormone (GPHA2:GPHB5) or thyrostimulin. The activity of this receptor is mediated by G proteins which activate adenylate cyclase. Plays a central role in controlling thyroid cell metabolism. The sequence is that of Thyrotropin receptor (TSHR) from Sus scrofa (Pig).